A 177-amino-acid chain; its full sequence is Large ribosomal subunit protein uL6 (177 aa).

It belongs to the universal ribosomal protein uL6 family. As to quaternary structure, part of the 50S ribosomal subunit.

In terms of biological role, this protein binds to the 23S rRNA, and is important in its secondary structure. It is located near the subunit interface in the base of the L7/L12 stalk, and near the tRNA binding site of the peptidyltransferase center. This chain is Large ribosomal subunit protein uL6, found in Methylorubrum populi (strain ATCC BAA-705 / NCIMB 13946 / BJ001) (Methylobacterium populi).